A 463-amino-acid chain; its full sequence is Chromosomal replication initiator protein DnaA (463 aa).

Positions 1 to 83 (MSTNQIILTD…LQLFQHYNNT (83 aa)) are domain I, interacts with DnaA modulators. The domain II stretch occupies residues 83 to 124 (TIKSVEIITKELPGTSKTVIELPTKTFADIGSSELNAENIFS). The interval 125 to 343 (TLDVRFTFDN…GALNKVIAHS (219 aa)) is domain III, AAA+ region. Positions 171, 173, 174, and 175 each coordinate ATP. The interval 344-463 (NFTLKEITLE…INLLMKILQN (120 aa)) is domain IV, binds dsDNA.

It belongs to the DnaA family. As to quaternary structure, oligomerizes as a right-handed, spiral filament on DNA at oriC.

The protein resides in the cytoplasm. In terms of biological role, plays an essential role in the initiation and regulation of chromosomal replication. ATP-DnaA binds to the origin of replication (oriC) to initiate formation of the DNA replication initiation complex once per cell cycle. Binds the DnaA box (a 9 base pair repeat at the origin) and separates the double-stranded (ds)DNA. Forms a right-handed helical filament on oriC DNA; dsDNA binds to the exterior of the filament while single-stranded (ss)DNA is stabiized in the filament's interior. The ATP-DnaA-oriC complex binds and stabilizes one strand of the AT-rich DNA unwinding element (DUE), permitting loading of DNA polymerase. After initiation quickly degrades to an ADP-DnaA complex that is not apt for DNA replication. Binds acidic phospholipids. The sequence is that of Chromosomal replication initiator protein DnaA from Rickettsia canadensis (strain McKiel).